A 458-amino-acid polypeptide reads, in one-letter code: Exodeoxyribonuclease 7 large subunit (458 aa).

Belongs to the XseA family. In terms of assembly, heterooligomer composed of large and small subunits.

The protein localises to the cytoplasm. It catalyses the reaction Exonucleolytic cleavage in either 5'- to 3'- or 3'- to 5'-direction to yield nucleoside 5'-phosphates.. Functionally, bidirectionally degrades single-stranded DNA into large acid-insoluble oligonucleotides, which are then degraded further into small acid-soluble oligonucleotides. This chain is Exodeoxyribonuclease 7 large subunit, found in Escherichia coli O17:K52:H18 (strain UMN026 / ExPEC).